The chain runs to 523 residues: Endoglucanase 19 (523 aa).

Positions 1-52 (MCSWSLSSHTLTSPVRQAAMEPKSSSCGGAGIRLRLLVVLHLLLLVPSSAMA) are cleaved as a signal peptide. Catalysis depends on D107, which acts as the Nucleophile. The N-linked (GlcNAc...) asparagine glycan is linked to N279. Catalysis depends on residues H442, D493, and E502.

The protein belongs to the glycosyl hydrolase 9 (cellulase E) family.

The protein resides in the secreted. It carries out the reaction Endohydrolysis of (1-&gt;4)-beta-D-glucosidic linkages in cellulose, lichenin and cereal beta-D-glucans.. This chain is Endoglucanase 19, found in Oryza sativa subsp. japonica (Rice).